A 549-amino-acid chain; its full sequence is Hydroxylamine reductase (549 aa).

The [4Fe-4S] cluster site is built by C3, C6, C15, and C21. Residues H244, E268, C313, C405, C433, C458, E492, and K494 each coordinate hybrid [4Fe-2O-2S] cluster. At C405 the chain carries Cysteine persulfide.

Belongs to the HCP family. The cofactor is [4Fe-4S] cluster. Requires hybrid [4Fe-2O-2S] cluster as cofactor.

The protein localises to the cytoplasm. It catalyses the reaction A + NH4(+) + H2O = hydroxylamine + AH2 + H(+). In terms of biological role, catalyzes the reduction of hydroxylamine to form NH(3) and H(2)O. The polypeptide is Hydroxylamine reductase (Crocosphaera subtropica (strain ATCC 51142 / BH68) (Cyanothece sp. (strain ATCC 51142))).